The following is a 238-amino-acid chain: Ribonuclease PH (238 aa).

Phosphate is bound by residues R86 and G124–R126.

It belongs to the RNase PH family. Homohexameric ring arranged as a trimer of dimers.

It catalyses the reaction tRNA(n+1) + phosphate = tRNA(n) + a ribonucleoside 5'-diphosphate. Functionally, phosphorolytic 3'-5' exoribonuclease that plays an important role in tRNA 3'-end maturation. Removes nucleotide residues following the 3'-CCA terminus of tRNAs; can also add nucleotides to the ends of RNA molecules by using nucleoside diphosphates as substrates, but this may not be physiologically important. Probably plays a role in initiation of 16S rRNA degradation (leading to ribosome degradation) during starvation. The sequence is that of Ribonuclease PH from Brucella anthropi (strain ATCC 49188 / DSM 6882 / CCUG 24695 / JCM 21032 / LMG 3331 / NBRC 15819 / NCTC 12168 / Alc 37) (Ochrobactrum anthropi).